Reading from the N-terminus, the 600-residue chain is RNA-binding protein 47 (600 aa).

Over residues 1-25 (MTAEDSASAVAMSNPSPSSSSKSSS) the composition is skewed to low complexity. The disordered stretch occupies residues 1–37 (MTAEDSASAVAMSNPSPSSSSKSSSGHPQHHCTVPEG). RRM domains lie at 82–160 (CEIF…SSVD), 162–244 (CRLF…WAEP), and 257–329 (KILY…LAKP).

Belongs to the RRM RBM47 family. As to quaternary structure, homodimer. May interact with MAVS; may regulate MAVS lysosomal degradation.

Its subcellular location is the nucleus. It is found in the cytoplasm. Single-stranded RNA-binding protein that functions in a variety of RNA processes, including alternative splicing, RNA stabilization, and RNA editing. Independently of its RNA-binding activity, could negatively regulate MAVS by promoting its lysosomal degradation. The protein is RNA-binding protein 47 (rbm47) of Danio rerio (Zebrafish).